A 180-amino-acid polypeptide reads, in one-letter code: NADH-quinone oxidoreductase subunit I (180 aa).

2 consecutive 4Fe-4S ferredoxin-type domains span residues G46–T80 and E90–D119. C60, C63, C66, C70, C99, C102, C105, and C109 together coordinate [4Fe-4S] cluster.

This sequence belongs to the complex I 23 kDa subunit family. In terms of assembly, NDH-1 is composed of 14 different subunits. Subunits NuoA, H, J, K, L, M, N constitute the membrane sector of the complex. The cofactor is [4Fe-4S] cluster.

It localises to the cell membrane. The catalysed reaction is a quinone + NADH + 5 H(+)(in) = a quinol + NAD(+) + 4 H(+)(out). Its function is as follows. NDH-1 shuttles electrons from NADH, via FMN and iron-sulfur (Fe-S) centers, to quinones in the respiratory chain. The immediate electron acceptor for the enzyme in this species is believed to be ubiquinone. Couples the redox reaction to proton translocation (for every two electrons transferred, four hydrogen ions are translocated across the cytoplasmic membrane), and thus conserves the redox energy in a proton gradient. This chain is NADH-quinone oxidoreductase subunit I, found in Baumannia cicadellinicola subsp. Homalodisca coagulata.